The chain runs to 152 residues: Transcriptional regulator MraZ (152 aa).

2 SpoVT-AbrB domains span residues 5 to 52 (ASAI…PIQE) and 81 to 124 (AHEC…DEAA).

This sequence belongs to the MraZ family. Forms oligomers.

The protein localises to the cytoplasm. The protein resides in the nucleoid. In Shewanella halifaxensis (strain HAW-EB4), this protein is Transcriptional regulator MraZ.